A 214-amino-acid polypeptide reads, in one-letter code: Adenylate kinase (214 aa).

An ATP-binding site is contributed by 10–15 (GAGKGT). Positions 30 to 59 (STGDMLRAAVKAGTPLGLEAKKVMDAGQLV) are NMP. AMP contacts are provided by residues Thr-31, Arg-36, 57 to 59 (QLV), 85 to 88 (GFPR), and Gln-92. Residues 122–159 (GRRVHPGSGRVYHIVYNPPKVEGKDDVTGEDLAIRPDD) form an LID region. ATP-binding positions include Arg-123 and 132 to 133 (VY). Arg-156 and Arg-167 together coordinate AMP. Gln-200 provides a ligand contact to ATP.

It belongs to the adenylate kinase family. In terms of assembly, monomer.

The protein resides in the cytoplasm. It catalyses the reaction AMP + ATP = 2 ADP. It participates in purine metabolism; AMP biosynthesis via salvage pathway; AMP from ADP: step 1/1. Its function is as follows. Catalyzes the reversible transfer of the terminal phosphate group between ATP and AMP. Plays an important role in cellular energy homeostasis and in adenine nucleotide metabolism. In Shewanella loihica (strain ATCC BAA-1088 / PV-4), this protein is Adenylate kinase.